Here is an 89-residue protein sequence, read N- to C-terminus: Putative septation protein SpoVG (89 aa).

It belongs to the SpoVG family.

Its function is as follows. Could be involved in septation. This is Putative septation protein SpoVG from Heliobacterium modesticaldum (strain ATCC 51547 / Ice1).